The primary structure comprises 215 residues: Octanoyltransferase (215 aa).

A BPL/LPL catalytic domain is found at 31–206 (PDSQDEIWLV…QLVKHLDYAE (176 aa)). Residues 70-77 (RGGQVTYH), 137-139 (SLG), and 150-152 (GLA) each bind substrate. The Acyl-thioester intermediate role is filled by C168.

This sequence belongs to the LipB family.

It localises to the cytoplasm. The catalysed reaction is octanoyl-[ACP] + L-lysyl-[protein] = N(6)-octanoyl-L-lysyl-[protein] + holo-[ACP] + H(+). It participates in protein modification; protein lipoylation via endogenous pathway; protein N(6)-(lipoyl)lysine from octanoyl-[acyl-carrier-protein]: step 1/2. Its function is as follows. Catalyzes the transfer of endogenously produced octanoic acid from octanoyl-acyl-carrier-protein onto the lipoyl domains of lipoate-dependent enzymes. Lipoyl-ACP can also act as a substrate although octanoyl-ACP is likely to be the physiological substrate. The protein is Octanoyltransferase of Pseudomonas putida (strain GB-1).